A 298-amino-acid chain; its full sequence is Exosome complex component Rrp4 (298 aa).

An S1 motif domain is found at 63–131; sequence GDVVIGKIKD…EVKKVKLGLK (69 aa). In terms of domain architecture, KH spans 139-197; that stretch reads RGGIIVDITPTKVPRLIGKKGSMINMIKDKTNCKIIVGQNGLVWVKGEEDMEQLTKDII. The interval 276–298 is disordered; the sequence is KNKKDKPLSYGNNSGNSYILNNR. Residues 285-298 are compositionally biased toward polar residues; that stretch reads YGNNSGNSYILNNR.

The protein belongs to the RRP4 family. Component of the archaeal exosome complex. Forms a trimer of Rrp4 and/or Csl4 subunits. The trimer associates with a hexameric ring-like arrangement composed of 3 Rrp41-Rrp42 heterodimers.

It localises to the cytoplasm. In terms of biological role, non-catalytic component of the exosome, which is a complex involved in RNA degradation. Increases the RNA binding and the efficiency of RNA degradation. Confers strong poly(A) specificity to the exosome. The polypeptide is Exosome complex component Rrp4 (Methanobrevibacter smithii (strain ATCC 35061 / DSM 861 / OCM 144 / PS)).